The chain runs to 643 residues: Sodium-dependent nutrient amino acid transporter 1 (643 aa).

A disordered region spans residues 1-38 (MELKGVQPSNGSPNGNGNGATNAASTEKTDAEKPTAER). The Cytoplasmic segment spans residues 1–40 (MELKGVQPSNGSPNGNGNGATNAASTEKTDAEKPTAERTN). Residues 8-26 (PSNGSPNGNGNGATNAAST) show a composition bias toward low complexity. Residues 27 to 36 (EKTDAEKPTA) show a composition bias toward basic and acidic residues. 3 helical membrane passes run 41 to 61 (WGNG…LGNV), 74 to 94 (GAFL…MYYL), and 111 to 131 (SVVP…ICII). 3 N-linked (GlcNAc...) asparagine glycosylation sites follow: N185, N190, and N200. Transmembrane regions (helical) follow at residues 231 to 251 (PDWK…LVIM), 260 to 280 (AAYF…IRAV), 309 to 329 (AVVQ…MFAS), 343 to 363 (IVTT…FAIL), 403 to 423 (LFSV…IVAL), 449 to 469 (VCGF…ILTL), 476 to 496 (TYVV…VYGL), 518 to 538 (CWSF…MATI), and 554 to 574 (VAGW…GLWY).

This sequence belongs to the sodium:neurotransmitter symporter (SNF) (TC 2.A.22) family.

Its subcellular location is the membrane. In terms of biological role, unusual broad substrate spectrum amino acid:sodium cotransporter that promotes absorption of the D isomers of essential amino acids. Neutral amino acids are the preferred substrates, especially methionine and phenylalanine. The chain is Sodium-dependent nutrient amino acid transporter 1 from Drosophila simulans (Fruit fly).